We begin with the raw amino-acid sequence, 182 residues long: MSLNLNDKKAVVAEISAKVATAQTIVVAEYRGIQVGHLTQLRAKARDQGVYLRVLKNTLARRAVEGTAFADLASEMTGPLIYSISDDAVAAAKVISDFAKTNDKLVVKAGNYAGKTLDKAAVTALANIPSREVLLAQVLGMMLVPVASFTRGLAALAAKKAEGETPAAAAEPVAEVTEAAAE.

This sequence belongs to the universal ribosomal protein uL10 family. As to quaternary structure, part of the ribosomal stalk of the 50S ribosomal subunit. The N-terminus interacts with L11 and the large rRNA to form the base of the stalk. The C-terminus forms an elongated spine to which L12 dimers bind in a sequential fashion forming a multimeric L10(L12)X complex.

Forms part of the ribosomal stalk, playing a central role in the interaction of the ribosome with GTP-bound translation factors. The protein is Large ribosomal subunit protein uL10 of Herminiimonas arsenicoxydans.